Consider the following 196-residue polypeptide: Imidazoleglycerol-phosphate dehydratase (196 aa).

It belongs to the imidazoleglycerol-phosphate dehydratase family.

The protein resides in the cytoplasm. The enzyme catalyses D-erythro-1-(imidazol-4-yl)glycerol 3-phosphate = 3-(imidazol-4-yl)-2-oxopropyl phosphate + H2O. It functions in the pathway amino-acid biosynthesis; L-histidine biosynthesis; L-histidine from 5-phospho-alpha-D-ribose 1-diphosphate: step 6/9. The sequence is that of Imidazoleglycerol-phosphate dehydratase from Lachnoclostridium phytofermentans (strain ATCC 700394 / DSM 18823 / ISDg) (Clostridium phytofermentans).